The sequence spans 405 residues: NADH-quinone oxidoreductase subunit D (405 aa).

The protein belongs to the complex I 49 kDa subunit family. NDH-1 is composed of 14 different subunits. Subunits NuoB, C, D, E, F, and G constitute the peripheral sector of the complex.

The protein localises to the cell inner membrane. It carries out the reaction a quinone + NADH + 5 H(+)(in) = a quinol + NAD(+) + 4 H(+)(out). Its function is as follows. NDH-1 shuttles electrons from NADH, via FMN and iron-sulfur (Fe-S) centers, to quinones in the respiratory chain. The immediate electron acceptor for the enzyme in this species is believed to be ubiquinone. Couples the redox reaction to proton translocation (for every two electrons transferred, four hydrogen ions are translocated across the cytoplasmic membrane), and thus conserves the redox energy in a proton gradient. The polypeptide is NADH-quinone oxidoreductase subunit D (Sphingopyxis alaskensis (strain DSM 13593 / LMG 18877 / RB2256) (Sphingomonas alaskensis)).